Consider the following 226-residue polypeptide: Triosephosphate isomerase (226 aa).

10–12 (NFK) contacts substrate. Catalysis depends on His96, which acts as the Electrophile. The active-site Proton acceptor is the Glu144. Substrate-binding positions include Ile149, Gly184, and 205-206 (AS).

It belongs to the triosephosphate isomerase family. As to quaternary structure, homotetramer; dimer of dimers.

It is found in the cytoplasm. The enzyme catalyses D-glyceraldehyde 3-phosphate = dihydroxyacetone phosphate. Its pathway is carbohydrate biosynthesis; gluconeogenesis. It functions in the pathway carbohydrate degradation; glycolysis; D-glyceraldehyde 3-phosphate from glycerone phosphate: step 1/1. Involved in the gluconeogenesis. Catalyzes stereospecifically the conversion of dihydroxyacetone phosphate (DHAP) to D-glyceraldehyde-3-phosphate (G3P). In Methanopyrus kandleri (strain AV19 / DSM 6324 / JCM 9639 / NBRC 100938), this protein is Triosephosphate isomerase.